A 352-amino-acid polypeptide reads, in one-letter code: Phosphoribosylformylglycinamidine cyclo-ligase (352 aa).

It belongs to the AIR synthase family.

The protein resides in the cytoplasm. It carries out the reaction 2-formamido-N(1)-(5-O-phospho-beta-D-ribosyl)acetamidine + ATP = 5-amino-1-(5-phospho-beta-D-ribosyl)imidazole + ADP + phosphate + H(+). It participates in purine metabolism; IMP biosynthesis via de novo pathway; 5-amino-1-(5-phospho-D-ribosyl)imidazole from N(2)-formyl-N(1)-(5-phospho-D-ribosyl)glycinamide: step 2/2. The polypeptide is Phosphoribosylformylglycinamidine cyclo-ligase (Stenotrophomonas maltophilia (strain R551-3)).